Here is a 346-residue protein sequence, read N- to C-terminus: DNA polymerase IV 2 (346 aa).

Residues 9 to 191 (ILHVDLDQFL…RTVEALWGVG (183 aa)) form the UmuC domain. Residues D13 and D111 each coordinate Mg(2+). Residue E112 is part of the active site.

Belongs to the DNA polymerase type-Y family. Monomer. Mg(2+) serves as cofactor.

It is found in the cytoplasm. It carries out the reaction DNA(n) + a 2'-deoxyribonucleoside 5'-triphosphate = DNA(n+1) + diphosphate. Functionally, poorly processive, error-prone DNA polymerase involved in untargeted mutagenesis. Copies undamaged DNA at stalled replication forks, which arise in vivo from mismatched or misaligned primer ends. These misaligned primers can be extended by PolIV. Exhibits no 3'-5' exonuclease (proofreading) activity. May be involved in translesional synthesis, in conjunction with the beta clamp from PolIII. The sequence is that of DNA polymerase IV 2 (dinB2) from Mycobacterium bovis (strain ATCC BAA-935 / AF2122/97).